The chain runs to 491 residues: Eupatolide synthase (491 aa).

The chain crosses the membrane as a helical; Signal-anchor for type II membrane protein span at residues 7–27 (LPSWLLPAVVILTISCILMLW). Residue Cys430 participates in heme binding.

It belongs to the cytochrome P450 family. Heme is required as a cofactor. In terms of tissue distribution, expressed in leaf primordia.

It is found in the membrane. The catalysed reaction is 8beta-hydroxygermacra-1(10),4,11(13)-trien-12-oate + reduced [NADPH--hemoprotein reductase] + O2 = eupatolide + oxidized [NADPH--hemoprotein reductase] + 2 H2O. Its pathway is secondary metabolite biosynthesis; terpenoid biosynthesis. Functionally, involved in the biosynthesis of germacrene-derived sesquiterpene lactones. Hydroxylates 8-beta-hydroxy-germacrene A acid to 6-alpha,8-beta-hydroxy-germacrene A acid, which, in turn, undergo spontaneous lactonization to become eupatolide. The sequence is that of Eupatolide synthase from Helianthus annuus (Common sunflower).